A 156-amino-acid chain; its full sequence is MADIKSRHFPRSANKRGAARLAAVQALYQMDIVGSGVMETAAEYEAYRLGKDIDGDQYLDADFQWFLAIITGVVQDQKQLDPLLHQQLSAEWSLSRLDSILRAILRAALWELINRKDVPVAVVVNEYVDIAKAFFEGDEPKLVNAVLDSMAKKIRL.

The protein belongs to the NusB family.

Its function is as follows. Involved in transcription antitermination. Required for transcription of ribosomal RNA (rRNA) genes. Binds specifically to the boxA antiterminator sequence of the ribosomal RNA (rrn) operons. In Bartonella tribocorum (strain CIP 105476 / IBS 506), this protein is Transcription antitermination protein NusB.